A 197-amino-acid polypeptide reads, in one-letter code: Lymphotoxin-alpha (197 aa).

An N-terminal signal peptide occupies residues 1 to 26; the sequence is MTPPGRLYLPLLLGLLLAPPPPGAQG. In terms of domain architecture, THD spans 55–197; sequence PAAHLVGDPS…SSVFFGAFAL (143 aa). Asn-88 is a glycosylation site (N-linked (GlcNAc...) asparagine). A disulfide bond links Cys-112 and Cys-148.

The protein belongs to the tumor necrosis factor family. As to quaternary structure, homotrimer, and heterotrimer of either two LTB and one LTA subunits or (less prevalent) two LTA and one LTB subunits. Interacts with TNFRSF14.

Its subcellular location is the secreted. It is found in the membrane. Cytokine that in its homotrimeric form binds to TNFRSF1A/TNFR1, TNFRSF1B/TNFBR and TNFRSF14/HVEM. In its heterotrimeric form with LTB binds to TNFRSF3/LTBR. Lymphotoxin is produced by lymphocytes and is cytotoxic for a wide range of tumor cells in vitro and in vivo. The chain is Lymphotoxin-alpha (LTA) from Oryctolagus cuniculus (Rabbit).